Reading from the N-terminus, the 177-residue chain is Large ribosomal subunit protein uL16 (177 aa).

Belongs to the universal ribosomal protein uL16 family. In terms of assembly, part of the 50S ribosomal subunit. Weakly binds 5S rRNA. Probably binds the A and P site tRNAs.

Its function is as follows. This is 1 of 5 proteins that mediate the attachment of the 5S rRNA onto the large ribosomal subunit, stabilizing the orientation of adjacent RNA domains. Modeling places the A and P site tRNAs in close proximity to this protein. The chain is Large ribosomal subunit protein uL16 from Haloarcula marismortui (strain ATCC 43049 / DSM 3752 / JCM 8966 / VKM B-1809) (Halobacterium marismortui).